Consider the following 202-residue polypeptide: Guanylate kinase (202 aa).

One can recognise a Guanylate kinase-like domain in the interval 3-181 (GNLFIITAPS…ALEDLRAIIR (179 aa)). 10–17 (APSGAGKT) contacts ATP.

This sequence belongs to the guanylate kinase family.

The protein localises to the cytoplasm. It carries out the reaction GMP + ATP = GDP + ADP. Essential for recycling GMP and indirectly, cGMP. This Methylobacillus flagellatus (strain ATCC 51484 / DSM 6875 / VKM B-1610 / KT) protein is Guanylate kinase.